The primary structure comprises 555 residues: High-affinity gluconate transporter ght3 (555 aa).

Topologically, residues 1–9 (MNRFITSIL) are cytoplasmic. Residues 10-30 (VVFISMSGWLQGADTGSISGI) form a helical membrane-spanning segment. Residues 31 to 58 (LGMRDFQSRFADRYNPISNSYSYSAWRQ) are Extracellular-facing. A helical membrane pass occupies residues 59-79 (ALLTGTINAGCLFGAMLSSPF). Residues 80–87 (TERIGKKY) are Cytoplasmic-facing. Residues 88-108 (SICFFSGVYIIAELLLVTAVP) form a helical membrane-spanning segment. Over 109 to 112 (SWIQ) the chain is Extracellular. A helical transmembrane segment spans residues 113–133 (VLVGKILAGVGIGALSVLSPG). The Cytoplasmic segment spans residues 134–144 (YQSEVAPPQIR). The chain crosses the membrane as a helical span at residues 145 to 165 (GAVVATYQIFSTGAALVAACI). Over 166-179 (NMGTHKLRKTASWR) the chain is Extracellular. A helical transmembrane segment spans residues 180–200 (TSFGINMLWGILLMVGVLFLP). Residues 201-266 (ESPRYLIYKG…IFGKDIRYRT (66 aa)) are Cytoplasmic-facing. A helical transmembrane segment spans residues 267 to 285 (CLGFLVMLFRELIGNNYYF). Residues 286–301 (YYATQVFKGTGMTDIF) are Extracellular-facing. The helical transmembrane segment at 302 to 322 (LPAVILGAINFGTTFGALYTI) threads the bilayer. Topologically, residues 323 to 328 (DNLGRR) are cytoplasmic. A helical transmembrane segment spans residues 329–349 (NPLIFGAAFQSICFFIYAAVG). Over 350-363 (DRKLIYKNGTSDHR) the chain is Extracellular. N357 carries N-linked (GlcNAc...) asparagine glycosylation. Residues 364–384 (AGSVMIVFSCLFLFSYCCSWG) form a helical membrane-spanning segment. Topologically, residues 385 to 404 (PMGWVIVGETFPIRYRSKCA) are cytoplasmic. The chain crosses the membrane as a helical span at residues 405–425 (SVATSGNWLGNFMISFFTPFI). Residues 426–432 (NNAIGFK) lie on the Extracellular side of the membrane. A helical transmembrane segment spans residues 433–453 (LGYIYACINLFSSFMIFFLAK). The Cytoplasmic segment spans residues 454–555 (ETKGLTLEEV…FSEDSHPTYI (102 aa)). A compositionally biased stretch (basic and acidic residues) spans 492-509 (KEEEKREREKSKGIRGQE). The segment at 492–555 (KEEEKREREK…FSEDSHPTYI (64 aa)) is disordered. Over residues 510–521 (EEFIENADEDNN) the composition is skewed to acidic residues. Positions 522–534 (DSSSSSGSVVSAV) are enriched in low complexity. The span at 545-555 (RFSEDSHPTYI) shows a compositional bias: basic and acidic residues.

It belongs to the major facilitator superfamily. Sugar transporter (TC 2.A.1.1) family.

It is found in the membrane. Its function is as follows. High-affinity gluconate transporter. The polypeptide is High-affinity gluconate transporter ght3 (ght3) (Schizosaccharomyces pombe (strain 972 / ATCC 24843) (Fission yeast)).